Here is a 1060-residue protein sequence, read N- to C-terminus: Carbamoyl phosphate synthase large chain (1060 aa).

Residues 1 to 401 (MPKRTDIRKI…SLLKACRSLE (401 aa)) are carboxyphosphate synthetic domain. 12 residues coordinate ATP: arginine 129, arginine 169, glycine 175, glycine 176, arginine 208, isoleucine 210, glutamate 215, glycine 241, isoleucine 242, histidine 243, glutamine 284, and glutamate 298. One can recognise an ATP-grasp 1 domain in the interval 133 to 327 (KQLMEELNQP…IAKLAAKIAV (195 aa)). Residues glutamine 284, glutamate 298, and asparagine 300 each coordinate Mg(2+). Residues glutamine 284, glutamate 298, and asparagine 300 each coordinate Mn(2+). Positions 402–546 (IGVDHIKIAD…YSTYAVENES (145 aa)) are oligomerization domain. Residues 547-929 (LISDKASILV…ALYKAFEAAY (383 aa)) form a carbamoyl phosphate synthetic domain region. One can recognise an ATP-grasp 2 domain in the interval 671–861 (EATLQALNIP…MAQVATKVIL (191 aa)). ATP contacts are provided by arginine 707, alanine 746, leucine 748, glutamate 752, glycine 777, valine 778, histidine 779, serine 780, glutamine 820, and glutamate 832. Residues glutamine 820, glutamate 832, and asparagine 834 each coordinate Mg(2+). Residues glutamine 820, glutamate 832, and asparagine 834 each coordinate Mn(2+). The MGS-like domain occupies 930–1060 (LHMPDYGNIV…SRAFTLKVLD (131 aa)). The segment at 930-1060 (LHMPDYGNIV…SRAFTLKVLD (131 aa)) is allosteric domain.

This sequence belongs to the CarB family. Composed of two chains; the small (or glutamine) chain promotes the hydrolysis of glutamine to ammonia, which is used by the large (or ammonia) chain to synthesize carbamoyl phosphate. Tetramer of heterodimers (alpha,beta)4. Mg(2+) serves as cofactor. It depends on Mn(2+) as a cofactor.

The enzyme catalyses hydrogencarbonate + L-glutamine + 2 ATP + H2O = carbamoyl phosphate + L-glutamate + 2 ADP + phosphate + 2 H(+). It carries out the reaction hydrogencarbonate + NH4(+) + 2 ATP = carbamoyl phosphate + 2 ADP + phosphate + 2 H(+). It participates in amino-acid biosynthesis; L-arginine biosynthesis; carbamoyl phosphate from bicarbonate: step 1/1. It functions in the pathway pyrimidine metabolism; UMP biosynthesis via de novo pathway; (S)-dihydroorotate from bicarbonate: step 1/3. Functionally, large subunit of the glutamine-dependent carbamoyl phosphate synthetase (CPSase). CPSase catalyzes the formation of carbamoyl phosphate from the ammonia moiety of glutamine, carbonate, and phosphate donated by ATP, constituting the first step of 2 biosynthetic pathways, one leading to arginine and/or urea and the other to pyrimidine nucleotides. The large subunit (synthetase) binds the substrates ammonia (free or transferred from glutamine from the small subunit), hydrogencarbonate and ATP and carries out an ATP-coupled ligase reaction, activating hydrogencarbonate by forming carboxy phosphate which reacts with ammonia to form carbamoyl phosphate. The polypeptide is Carbamoyl phosphate synthase large chain (Streptococcus agalactiae serotype III (strain NEM316)).